The primary structure comprises 479 residues: Glutamyl-tRNA(Gln) amidotransferase subunit A (479 aa).

Active-site charge relay system residues include lysine 71 and serine 146. Serine 170 acts as the Acyl-ester intermediate in catalysis.

It belongs to the amidase family. GatA subfamily. In terms of assembly, heterotrimer of A, B and C subunits.

It catalyses the reaction L-glutamyl-tRNA(Gln) + L-glutamine + ATP + H2O = L-glutaminyl-tRNA(Gln) + L-glutamate + ADP + phosphate + H(+). In terms of biological role, allows the formation of correctly charged Gln-tRNA(Gln) through the transamidation of misacylated Glu-tRNA(Gln) in organisms which lack glutaminyl-tRNA synthetase. The reaction takes place in the presence of glutamine and ATP through an activated gamma-phospho-Glu-tRNA(Gln). This is Glutamyl-tRNA(Gln) amidotransferase subunit A from Lactobacillus gasseri (strain ATCC 33323 / DSM 20243 / BCRC 14619 / CIP 102991 / JCM 1131 / KCTC 3163 / NCIMB 11718 / NCTC 13722 / AM63).